The chain runs to 382 residues: Homeobox protein SHOOT MERISTEMLESS (382 aa).

The interval 26 to 59 (MMMMMPPIMTSHQHHGHDHQHQQQEHDGYAYQSH) is disordered. Over residues 44–53 (HQHQQQEHDG) the composition is skewed to basic and acidic residues. The ELK domain maps to 262-282 (ELKGQLLRKYSGYLGSLKQEF). The homeobox; TALE-type DNA-binding region spans 283-346 (MKKRKKGKLP…NQRKRHWKPS (64 aa)).

Belongs to the TALE/KNOX homeobox family. In terms of assembly, forms homodimers. May form heterodimeric complexes with TALE/BELL proteins BEL1, BLH2, BLH3, BLH8/PNF, BLH9/PNY and ATH1. Interacts with CCT8. Binds to MBP2C; this interaction reduces RNA binding capacity. Interacts with FTIP3 and FTIP4. In terms of tissue distribution, expressed in all four types of shoot apical meristems (SAM) i.e. in vegetative, axillary, inflorescence and floral.

It localises to the nucleus. Its subcellular location is the cell junction. The protein resides in the plasmodesma. The protein localises to the cytoplasm. It is found in the endosome. It localises to the cell membrane. Its function is as follows. Required for shoot apical meristem (SAM) formation during embryogenesis. Negatively regulates ASYMMETRIC LEAVES1 (AS1) and ASYMMETRIC LEAVES2 (AS2 or LBD6). Probably binds to the DNA sequence 5'-TGAC-3'. Binds to RNA. This chain is Homeobox protein SHOOT MERISTEMLESS, found in Arabidopsis thaliana (Mouse-ear cress).